A 372-amino-acid chain; its full sequence is Queuine tRNA-ribosyltransferase (372 aa).

The active-site Proton acceptor is the Asp-93. Residues 93 to 97, Asp-147, Gln-190, and Gly-217 contribute to the substrate site; that span reads DSGGF. Residues 248–254 are RNA binding; that stretch reads GVGSPDC. Asp-267 (nucleophile) is an active-site residue. An RNA binding; important for wobble base 34 recognition region spans residues 272-276; sequence TRMAR. Residues Cys-305, Cys-307, Cys-310, and His-336 each coordinate Zn(2+).

It belongs to the queuine tRNA-ribosyltransferase family. As to quaternary structure, homodimer. Within each dimer, one monomer is responsible for RNA recognition and catalysis, while the other monomer binds to the replacement base PreQ1. Zn(2+) is required as a cofactor.

The enzyme catalyses 7-aminomethyl-7-carbaguanine + guanosine(34) in tRNA = 7-aminomethyl-7-carbaguanosine(34) in tRNA + guanine. It participates in tRNA modification; tRNA-queuosine biosynthesis. Its function is as follows. Catalyzes the base-exchange of a guanine (G) residue with the queuine precursor 7-aminomethyl-7-deazaguanine (PreQ1) at position 34 (anticodon wobble position) in tRNAs with GU(N) anticodons (tRNA-Asp, -Asn, -His and -Tyr). Catalysis occurs through a double-displacement mechanism. The nucleophile active site attacks the C1' of nucleotide 34 to detach the guanine base from the RNA, forming a covalent enzyme-RNA intermediate. The proton acceptor active site deprotonates the incoming PreQ1, allowing a nucleophilic attack on the C1' of the ribose to form the product. After dissociation, two additional enzymatic reactions on the tRNA convert PreQ1 to queuine (Q), resulting in the hypermodified nucleoside queuosine (7-(((4,5-cis-dihydroxy-2-cyclopenten-1-yl)amino)methyl)-7-deazaguanosine). The protein is Queuine tRNA-ribosyltransferase of Desulforudis audaxviator (strain MP104C).